We begin with the raw amino-acid sequence, 684 residues long: Methionine--tRNA ligase (684 aa).

Residues 17 to 27 carry the 'HIGH' region motif; it reads PYANGKAHVGH. Cys148, Cys151, Cys160, and Cys164 together coordinate Zn(2+). Residues 330 to 334 carry the 'KMSKS' region motif; that stretch reads TFSKS. Position 333 (Lys333) interacts with ATP. Residues 582 to 684 form the tRNA-binding domain; it reads DFSKLDIRIG…KETNPGTCIH (103 aa).

It belongs to the class-I aminoacyl-tRNA synthetase family. MetG type 1 subfamily. As to quaternary structure, homodimer. It depends on Zn(2+) as a cofactor.

Its subcellular location is the cytoplasm. It carries out the reaction tRNA(Met) + L-methionine + ATP = L-methionyl-tRNA(Met) + AMP + diphosphate. Functionally, is required not only for elongation of protein synthesis but also for the initiation of all mRNA translation through initiator tRNA(fMet) aminoacylation. The polypeptide is Methionine--tRNA ligase (Methanococcoides burtonii (strain DSM 6242 / NBRC 107633 / OCM 468 / ACE-M)).